The chain runs to 149 residues: Large ribosomal subunit protein bL9 (149 aa).

Belongs to the bacterial ribosomal protein bL9 family.

Functionally, binds to the 23S rRNA. The protein is Large ribosomal subunit protein bL9 of Ligilactobacillus salivarius (strain UCC118) (Lactobacillus salivarius).